The chain runs to 287 residues: Nucleotide-binding protein TGRD_433 (287 aa).

9–16 (GMSGAGKS) contributes to the ATP binding site. Position 60-63 (60-63 (DSRA)) interacts with GTP.

It belongs to the RapZ-like family.

Functionally, displays ATPase and GTPase activities. The chain is Nucleotide-binding protein TGRD_433 from Endomicrobium trichonymphae.